Here is a 264-residue protein sequence, read N- to C-terminus: Teichoic acids export ATP-binding protein TagH (264 aa).

The 222-residue stretch at 22–243 (ERLKDVIVPF…YEKFLNDFKK (222 aa)) folds into the ABC transporter domain. 57–64 (GINGSGKS) serves as a coordination point for ATP.

This sequence belongs to the ABC transporter superfamily. Teichoic acids exporter (TC 3.A.1.104.1) family. In terms of assembly, the complex is composed of two ATP-binding proteins (TagH) and two transmembrane proteins (TagG).

The protein localises to the cell membrane. The catalysed reaction is ATP + H2O + teichoic acidSide 1 = ADP + phosphate + teichoic acidSide 2.. Part of the ABC transporter complex TagGH involved in teichoic acids export. Responsible for energy coupling to the transport system. In Staphylococcus saprophyticus subsp. saprophyticus (strain ATCC 15305 / DSM 20229 / NCIMB 8711 / NCTC 7292 / S-41), this protein is Teichoic acids export ATP-binding protein TagH.